The primary structure comprises 227 residues: Transcription elongation factor A protein-like 2 (227 aa).

Disordered stretches follow at residues 1-145 (MEKL…TNKG) and 202-227 (FYPRGPREFRGGCRAPRRDTEDIPYV). Basic and acidic residues-rich tracts occupy residues 18–43 (IDNEEQPPHEGKPEVACILEDKKLEN), 50–82 (TGKRVEEPLKDKEKPESAGKAKGEGKSERKGKS), 90–113 (TEGKPERGGRAEGEGEPDSEREPE), 120–136 (SETRAAGKRPAEDDIPR), and 206–227 (GPREFRGGCRAPRRDTEDIPYV).

The protein belongs to the TFS-II family. TFA subfamily.

The protein resides in the nucleus. Functionally, may be involved in transcriptional regulation. In Homo sapiens (Human), this protein is Transcription elongation factor A protein-like 2 (TCEAL2).